The sequence spans 31 residues: MLTITSYFGFLLVVLTITSALFIGLSKIRLI.

The helical transmembrane segment at 4-24 (ITSYFGFLLVVLTITSALFIG) threads the bilayer.

Belongs to the PetL family. In terms of assembly, the 4 large subunits of the cytochrome b6-f complex are cytochrome b6, subunit IV (17 kDa polypeptide, PetD), cytochrome f and the Rieske protein, while the 4 small subunits are PetG, PetL, PetM and PetN. The complex functions as a dimer.

Its subcellular location is the plastid. The protein localises to the chloroplast thylakoid membrane. In terms of biological role, component of the cytochrome b6-f complex, which mediates electron transfer between photosystem II (PSII) and photosystem I (PSI), cyclic electron flow around PSI, and state transitions. PetL is important for photoautotrophic growth as well as for electron transfer efficiency and stability of the cytochrome b6-f complex. This Jasminum nudiflorum (Winter jasmine) protein is Cytochrome b6-f complex subunit 6.